The primary structure comprises 305 residues: PI-PLC X domain-containing protein 2 (305 aa).

The region spanning 42 to 215 (HLHNLPLSNL…NCQVLIFYHC (174 aa)) is the PI-PLC X-box domain. Catalysis depends on residues His57 and His132.

Widely expressed.

The protein localises to the nucleus. It catalyses the reaction a 1,2-diacyl-sn-glycero-3-phospho-(1D-myo-inositol) + H2O = 1D-myo-inositol 1-phosphate + a 1,2-diacyl-sn-glycerol + H(+). Its function is as follows. Catalyzes the hydrolysis of inositol from phosphatidylinositol (1,2-diacyl-sn-glycero-3-phospho-(1D-myo-inositol), PI). Could also hydrolyze various multi-phosphorylated derivatives of PI, such as phosphatidylinositol-4,5 bisphosphate (PIP2), releasing inositol-1,4,5-trisphosphate (IP3) and the protein kinase C activator diacylglycerol (DAG), therefore mediating cell signaling. This Homo sapiens (Human) protein is PI-PLC X domain-containing protein 2 (PLCXD2).